Consider the following 65-residue polypeptide: Small ribosomal subunit protein bS21A (65 aa).

This sequence belongs to the bacterial ribosomal protein bS21 family.

In Francisella tularensis subsp. holarctica (strain LVS), this protein is Small ribosomal subunit protein bS21A.